We begin with the raw amino-acid sequence, 206 residues long: MANNTRARRTARLSRALGIALTPKAAKYMERRPYGPGEHGRARKKQDSDYAVRLREKQRLRAQYGIREAQMTRAFEEARRTKGLTGENLVELLEMRLDALVLRAGFARTIAQARQLVVHRHIMVDGIRVDRPSFRVGEGQLIHVHSRSEVMPPFQVAAAGAHVLNNVPAYLDVKIDALQARLVRRPKRSEVPVICEEQLVVEFYAR.

The segment at 28–48 is disordered; sequence YMERRPYGPGEHGRARKKQDS. The 66-residue stretch at 95–160 folds into the S4 RNA-binding domain; that stretch reads MRLDALVLRA…MPPFQVAAAG (66 aa).

The protein belongs to the universal ribosomal protein uS4 family. As to quaternary structure, part of the 30S ribosomal subunit. Contacts protein S5. The interaction surface between S4 and S5 is involved in control of translational fidelity.

Its function is as follows. One of the primary rRNA binding proteins, it binds directly to 16S rRNA where it nucleates assembly of the body of the 30S subunit. Functionally, with S5 and S12 plays an important role in translational accuracy. The sequence is that of Small ribosomal subunit protein uS4 from Paenarthrobacter aurescens (strain TC1).